The chain runs to 531 residues: Light-independent protochlorophyllide reductase subunit B (531 aa).

Asp-36 provides a ligand contact to [4Fe-4S] cluster. Asp-287 (proton donor) is an active-site residue. 422–423 (GL) provides a ligand contact to substrate.

It belongs to the ChlB/BchB/BchZ family. As to quaternary structure, protochlorophyllide reductase is composed of three subunits; BchL, BchN and BchB. Forms a heterotetramer of two BchB and two BchN subunits. Requires [4Fe-4S] cluster as cofactor.

The enzyme catalyses chlorophyllide a + oxidized 2[4Fe-4S]-[ferredoxin] + 2 ADP + 2 phosphate = protochlorophyllide a + reduced 2[4Fe-4S]-[ferredoxin] + 2 ATP + 2 H2O. It functions in the pathway porphyrin-containing compound metabolism; bacteriochlorophyll biosynthesis (light-independent). Its function is as follows. Component of the dark-operative protochlorophyllide reductase (DPOR) that uses Mg-ATP and reduced ferredoxin to reduce ring D of protochlorophyllide (Pchlide) to form chlorophyllide a (Chlide). This reaction is light-independent. The NB-protein (BchN-BchB) is the catalytic component of the complex. This is Light-independent protochlorophyllide reductase subunit B from Rhodopseudomonas palustris (strain BisA53).